Reading from the N-terminus, the 427-residue chain is Glucose-6-phosphate isomerase (427 aa).

Catalysis depends on E281, which acts as the Proton donor. Catalysis depends on residues H302 and K417.

Belongs to the GPI family.

The protein resides in the cytoplasm. The catalysed reaction is alpha-D-glucose 6-phosphate = beta-D-fructose 6-phosphate. The protein operates within carbohydrate biosynthesis; gluconeogenesis. Its pathway is carbohydrate degradation; glycolysis; D-glyceraldehyde 3-phosphate and glycerone phosphate from D-glucose: step 2/4. Catalyzes the reversible isomerization of glucose-6-phosphate to fructose-6-phosphate. The sequence is that of Glucose-6-phosphate isomerase from Mycoplasmopsis pulmonis (strain UAB CTIP) (Mycoplasma pulmonis).